The chain runs to 510 residues: MTTSIIERIDAWAEKTPDFPCYEYAGTRLSYKELKRQSDAFGSFLLNNLNTDKEKPIIVYGHMSPLMLIAFLGSIKSGRAYVPVDVSMPVERIEQIKKAADPSMFICTEELPSNLTITGCPVLSQEQLMDALEKHFDEVPDKAECVKNDDNYYIIYTSGSTGNPKGVQISQNNLVSFSNWILQDFSLRQGLRFLNQAPFSFDLSVMDLYPSLLSGGTLVPLDKTITANMKDLYREIPAQNFDVWVSTPSFADLCLLDENFNQENNPSLTRFLFCGEVLAKKTATELLDRFPDAVIYNTYGPTEATVAVTQVKVTRELIEAYPSLPLGVIKPDMRLHIVDQETGEILPEGEKGEIILIGASVSKGYLNEPEKTDQVFFDYKGYQAYHTGDSGIIKDGYLFFQGRLDFQIKLHGYRIELEDIENNLKKVSYIQNCAIIPKMKDEKVDMLVAQVIPTNHDFEKEYQLSAAIKNELKEFMPAYMIPRKWIYKTEFPLTMNGKIDRKALNSEVNK.

157 to 158 (TS) provides a ligand contact to ATP. Aspartate 202 serves as a coordination point for D-alanine. 297–302 (NTYGPT) serves as a coordination point for ATP. Valine 306 serves as a coordination point for D-alanine. Positions 389 and 498 each coordinate ATP. Position 498 (lysine 498) interacts with D-alanine.

It belongs to the ATP-dependent AMP-binding enzyme family. DltA subfamily.

The protein localises to the cytoplasm. It catalyses the reaction holo-[D-alanyl-carrier protein] + D-alanine + ATP = D-alanyl-[D-alanyl-carrier protein] + AMP + diphosphate. Its pathway is cell wall biogenesis; lipoteichoic acid biosynthesis. In terms of biological role, catalyzes the first step in the D-alanylation of lipoteichoic acid (LTA), the activation of D-alanine and its transfer onto the D-alanyl carrier protein (Dcp) DltC. In an ATP-dependent two-step reaction, forms a high energy D-alanyl-AMP intermediate, followed by transfer of the D-alanyl residue as a thiol ester to the phosphopantheinyl prosthetic group of the Dcp. D-alanylation of LTA plays an important role in modulating the properties of the cell wall in Gram-positive bacteria, influencing the net charge of the cell wall. The protein is D-alanine--D-alanyl carrier protein ligase of Listeria monocytogenes serotype 4a (strain HCC23).